Here is a 283-residue protein sequence, read N- to C-terminus: uncharacterized protein (283 aa).

Helical transmembrane passes span L8–V28, G38–A58, F73–G93, I100–I120, and A175–T195.

Belongs to the cation diffusion facilitator (CDF) transporter (TC 2.A.4) family.

Its subcellular location is the cell membrane. This is an uncharacterized protein from Methanocaldococcus jannaschii (strain ATCC 43067 / DSM 2661 / JAL-1 / JCM 10045 / NBRC 100440) (Methanococcus jannaschii).